Here is a 458-residue protein sequence, read N- to C-terminus: Flavonol 3-O-glucosyltransferase UGT76E12 (458 aa).

H25 acts as the Proton acceptor in catalysis. H25 serves as a coordination point for an anthocyanidin. Catalysis depends on D118, which acts as the Charge relay. Residues T140, A339, Q341, H356, W359, N360, S361, and E364 each contribute to the UDP-alpha-D-glucose site. G379 contributes to the an anthocyanidin binding site. UDP-alpha-D-glucose contacts are provided by D380 and Q381.

It belongs to the UDP-glycosyltransferase family.

It catalyses the reaction a flavonol + UDP-alpha-D-glucose = a flavonol 3-O-beta-D-glucoside + UDP + H(+). The catalysed reaction is a 7-O-hydroxy-flavonol + UDP-alpha-D-glucose = a flavonol 7-O-beta-D-glucoside + UDP + H(+). Its function is as follows. Possesses quercetin 3-O-glucosyltransferase and 7-O-glucosyltransferase activities in vitro. This Arabidopsis thaliana (Mouse-ear cress) protein is Flavonol 3-O-glucosyltransferase UGT76E12.